A 472-amino-acid polypeptide reads, in one-letter code: Probable serine/threonine-protein kinase At1g01540 (472 aa).

A helical membrane pass occupies residues 24-44 (LWVVIGILLGSLIVIALFLLS). 2 positions are modified to phosphothreonine: T67 and T143. One can recognise a Protein kinase domain in the interval 154–431 (LCEENVIGEG…IHMLEAEDLL (278 aa)). ATP-binding positions include 160–168 (IGEGGYGIV) and K182. Y227 is modified (phosphotyrosine). D280 serves as the catalytic Proton acceptor. S284 is subject to Phosphoserine. T314 and T319 each carry phosphothreonine. Residue Y327 is modified to Phosphotyrosine. Positions 437-449 (RTTRDHGSRERQE) are enriched in basic and acidic residues. Positions 437–472 (RTTRDHGSRERQETAVVAAGSESGESGSRHHQQKQR) are disordered. Residues 451 to 462 (AVVAAGSESGES) show a composition bias toward low complexity.

Belongs to the protein kinase superfamily. Ser/Thr protein kinase family.

It localises to the membrane. The catalysed reaction is L-seryl-[protein] + ATP = O-phospho-L-seryl-[protein] + ADP + H(+). It carries out the reaction L-threonyl-[protein] + ATP = O-phospho-L-threonyl-[protein] + ADP + H(+). The sequence is that of Probable serine/threonine-protein kinase At1g01540 from Arabidopsis thaliana (Mouse-ear cress).